The primary structure comprises 538 residues: Non-specific phospholipase C4 (538 aa).

Positions 91-112 are disordered; that stretch reads KPWDSGKPDPNPGHPNMSGFAQ.

The protein belongs to the bacterial phospholipase C family. Expressed in root tips, cotyledons, on leaf margins, stems, young anthers and funiculus.

It localises to the cell membrane. It carries out the reaction a 1,2-diacyl-sn-glycero-3-phosphocholine + H2O = phosphocholine + a 1,2-diacyl-sn-glycerol + H(+). Non-specific phospholipase C (PLC) which assumes major PLC activity during inorganic phosphate starvation. Substrate preference is phosphatidylcholine (PC), but can also hydrolyze phosphatidylethanolamine (PE) with lower efficiency. Has no activity toward phosphatidic acid (PA). Plays an important role in the supply of both inorganic phosphate and diacylglycerol from membrane-localized phospholipids during phosphate deprivation. May be required for lipid-derived signaling molecules that positively modulate abscisic acid (ABA) response and promote plant tolerance to drought and salt stresses. May be involved in brassinolide-mediated signaling in root development. The sequence is that of Non-specific phospholipase C4 (NPC4) from Arabidopsis thaliana (Mouse-ear cress).